Reading from the N-terminus, the 130-residue chain is S-adenosylmethionine decarboxylase proenzyme (130 aa).

Residue Ser78 is the Schiff-base intermediate with substrate; via pyruvic acid of the active site. Ser78 bears the Pyruvic acid (Ser); by autocatalysis mark. His83 functions as the Proton acceptor; for processing activity in the catalytic mechanism. Residue Cys98 is the Proton donor; for catalytic activity of the active site.

Belongs to the prokaryotic AdoMetDC family. Type 1 subfamily. Heterotetramer of two alpha and two beta chains arranged as a dimer of alpha/beta heterodimers. Pyruvate serves as cofactor. Is synthesized initially as an inactive proenzyme. Formation of the active enzyme involves a self-maturation process in which the active site pyruvoyl group is generated from an internal serine residue via an autocatalytic post-translational modification. Two non-identical subunits are generated from the proenzyme in this reaction, and the pyruvate is formed at the N-terminus of the alpha chain, which is derived from the carboxyl end of the proenzyme. The post-translation cleavage follows an unusual pathway, termed non-hydrolytic serinolysis, in which the side chain hydroxyl group of the serine supplies its oxygen atom to form the C-terminus of the beta chain, while the remainder of the serine residue undergoes an oxidative deamination to produce ammonia and the pyruvoyl group blocking the N-terminus of the alpha chain.

It catalyses the reaction S-adenosyl-L-methionine + H(+) = S-adenosyl 3-(methylsulfanyl)propylamine + CO2. It functions in the pathway amine and polyamine biosynthesis; S-adenosylmethioninamine biosynthesis; S-adenosylmethioninamine from S-adenosyl-L-methionine: step 1/1. In terms of biological role, catalyzes the decarboxylation of S-adenosylmethionine to S-adenosylmethioninamine (dcAdoMet), the propylamine donor required for the synthesis of the polyamines spermine and spermidine from the diamine putrescine. This chain is S-adenosylmethionine decarboxylase proenzyme, found in Aeropyrum pernix (strain ATCC 700893 / DSM 11879 / JCM 9820 / NBRC 100138 / K1).